Reading from the N-terminus, the 285-residue chain is G patch domain-containing protein 11 (285 aa).

A coiled-coil region spans residues 51-87; it reads MLRQIREARRKEEKQQEANLKNRQKSLKEEEQERRDI. Positions 59-84 are disordered; it reads RRKEEKQQEANLKNRQKSLKEEEQER. The G-patch domain occupies 95–141; sequence CENKGFALLQKMGYKSGQALGKSGGGIVEPIPLNIKTGKSGIGHEAS. A Phosphoserine modification is found at Ser-141. Lys-149 bears the N6-acetyllysine mark. Residues 218 to 235 are compositionally biased toward acidic residues; the sequence is EETEEDEEEKEQDEDEYK. A disordered region spans residues 218–237; the sequence is EETEEDEEEKEQDEDEYKSE.

Belongs to the GPATCH11 family.

The protein resides in the chromosome. It localises to the centromere. It is found in the kinetochore. In Homo sapiens (Human), this protein is G patch domain-containing protein 11 (GPATCH11).